Reading from the N-terminus, the 159-residue chain is 3-dehydroquinate dehydratase (159 aa).

Tyr-22 acts as the Proton acceptor in catalysis. Residues Asn-73, His-79, and Asp-86 each coordinate substrate. His-99 functions as the Proton donor in the catalytic mechanism. Substrate contacts are provided by residues 100-101 (IS) and Arg-110.

This sequence belongs to the type-II 3-dehydroquinase family. Homododecamer.

The catalysed reaction is 3-dehydroquinate = 3-dehydroshikimate + H2O. It participates in metabolic intermediate biosynthesis; chorismate biosynthesis; chorismate from D-erythrose 4-phosphate and phosphoenolpyruvate: step 3/7. Catalyzes a trans-dehydration via an enolate intermediate. The chain is 3-dehydroquinate dehydratase from Campylobacter jejuni subsp. doylei (strain ATCC BAA-1458 / RM4099 / 269.97).